Here is a 413-residue protein sequence, read N- to C-terminus: Gamma-lactamase FDB1 (413 aa).

7 residues coordinate Zn(2+): His-126, His-128, Asp-130, His-131, His-211, Asp-235, and His-323.

This sequence belongs to the metallo-beta-lactamase superfamily.

It functions in the pathway xenobiotic degradation. Its function is as follows. Gamma-lactamase; part of the Fusarium detoxification of benzoxazolinone cluster involved in the degradation of benzoxazolinones produced by the host plant. Maize, wheat, and rye produce the 2 benzoxazinone phytoanticipins 2,4-dihy-droxy-7-methoxy-1,4-benzoxazin-3-one (DIMBOA) and 2,4-dihydroxy-1,4-benzoxazin-3-one (DIBOA) that, due to their inherent instability once released, spontaneously degrade to the more stable corresponding benzoxazolinones, 6-methoxy-2-benzoxazolinone (MBOA) and 2-benzoxazolinone (BOA), respectively. The first step in the detoxification of benzoxazolinones involves the hydrolysis of the cyclic ester bond of benzoxazolinones by the gamma-lactamase FDB1 to aminophenols. FDB1 is able to convert BOA into 2-aminophenol (2-AP), as well as MBOA into 5-methoxy-2-aminophenol (2-AMP). The N-malonyltransferase FDB2 then metabolizes aminophenols via N-malonylation to non-toxic malonamic acids. FDB2 converts 2-AP into N-(2-hydroxyphenyl) malonamic acid (HPMA) and 2-AMP into N-(2-hydroxy-4-methoxyphenyl) malonamic acid (HMPMA). The cluster also contains 2 transcription factors (FDB3 and FPSE_08121), an aldo-keto reductase (FPSE_08125) that possibly associates with a ketone component of BOA and MBOA degradation, an esterase (FPSE_08126), an acyl-CoA transferase (FPSE_08120), a solute carrier protein (FPSE_08119) and a transmembrane transporter (FPSE_08127) proposed to shuttle metabolites of benzoxazolinone degradation. The polypeptide is Gamma-lactamase FDB1 (Fusarium pseudograminearum (strain CS3096) (Wheat and barley crown-rot fungus)).